A 246-amino-acid polypeptide reads, in one-letter code: mRNA-decapping protein g5R (246 aa).

The 149-residue stretch at 91-239 (KYQKFKKNWL…IIGPAFNFIK (149 aa)) folds into the Nudix hydrolase domain. The Nudix box signature appears at 128 to 149 (GKPKENESDLACAIREFEEETG). Glu134 is a binding site for Mg(2+). The active-site Nucleophile is Glu143. Mg(2+) is bound by residues Glu147 and Glu169.

This sequence belongs to the Nudix hydrolase family. DIPP subfamily. Interacts with host RPL23A. Mg(2+) serves as cofactor. The cofactor is Mn(2+).

The protein localises to the host rough endoplasmic reticulum. It catalyses the reaction diphospho-myo-inositol polyphosphate + H2O = myo-inositol polyphosphate + phosphate.. Functionally, decapping enzyme required for the removal of the 5'-end m7GpppN cap tethered to viral and host mRNAs to allow their decay in cells. May therefore accelerate viral and cellular mRNA turnover to eliminate competing host mRNAs and allow stage-specific synthesis of viral proteins. Acceleration of the turnover of cellular transcripts may even promote the shutoff of host protein synthesis. In addition to the mRNA cap, g5R also efficiently hydrolyzes diphosphoinositol polyphosphates. Down-regulation of the level of PP-InsP5 (diphosphoinositol pentakisphosphate) may play a role in viral manipulation of the cellular secretory pathway, a step necessary for the formation of virions. Binds viral and cellular poly(A) mRNAs, thereby decreasing both types of mRNAs. This African swine fever virus (isolate Pig/Kenya/KEN-50/1950) (ASFV) protein is mRNA-decapping protein g5R.